A 136-amino-acid chain; its full sequence is Large ribosomal subunit protein uL16 (136 aa).

Belongs to the universal ribosomal protein uL16 family. In terms of assembly, part of the 50S ribosomal subunit.

In terms of biological role, binds 23S rRNA and is also seen to make contacts with the A and possibly P site tRNAs. This is Large ribosomal subunit protein uL16 from Edwardsiella ictaluri (strain 93-146).